The following is a 919-amino-acid chain: MNELLRDDIRYLGRILGEVISEQEGHHVFELVERARRTSFDIAKGRAEMDSLVEVFAGIDPEDATPVARAFTHFALLANLAEDLHDAAQREQALNSGEPAPDSTLEATWVKLDDAGVGSGEVAAVIRNALVAPVLTAHPTETRRRTVFDAQKHITALMEERHLLLALPTHARTQSKLDDIERNIRRRITILWQTALIRVARPRIEDEVEVGLRYYKLSLLAEIPRINHDVTVELARRFGGDIPTTAMVRPGSWIGGDHDGNPFVTAETVTYATHRAAETVLKYYVKQLHALEHELSLSDRMNVISDELRVLADAGQNDMPSRVDEPYRRAIHGMRGRMLATTAALIGEEAVEGTWFKTFTPYTDTHEFKRDLDIVDGSLRMSRDDIIADDRLAMLRSALDSFGFNLYSLDLRQNSDGFEDVLTELFATAQTEKNYRGLTEAEKLDLLIRELSTPRPLIPHGDPDYSEATNRELGIFSKAAEAVRKFGPLMVPHCIISMASSVTDILEPMVLLKEFGLIRANGKNPTGSVDVIPLFETIDDLQRGAGILEELWDIDLYRNYLEQRDNVQEVMLGYSDSNKDGGYFAANWALYDAELRLVELCRGRNVKLRLFHGRGGTVGRGGGPSYDAILAQPKGAVRGAVRVTEQGEIISAKYGNPDTARRNLEALVSATLEASLLDDVELPNRERAHQIMGEISELSFRRYSSLVHEDPGFIQYFTQSTPLQEIGSLNIGSRPSSRKQTNTVEDLRAIPWVLSWSQSRVMLPGWFGVGTALREWIGEGEGAAERIAELQELNRCWPFFTSVLDNMAQVMSKAELRLARLYADLIPDREVADRIYETIFGEYFLTKEMFCTITGSQDLLDDNPALARSVRSRFPYLLPLNVIQVEMMRRYRSGDEGTAVPRNIRLTMNGLSTALRNSG.

Active-site residues include H138 and K579.

Belongs to the PEPCase type 1 family. It depends on Mg(2+) as a cofactor.

The enzyme catalyses oxaloacetate + phosphate = phosphoenolpyruvate + hydrogencarbonate. Its function is as follows. Forms oxaloacetate, a four-carbon dicarboxylic acid source for the tricarboxylic acid cycle. The protein is Phosphoenolpyruvate carboxylase (ppc) of Corynebacterium efficiens (strain DSM 44549 / YS-314 / AJ 12310 / JCM 11189 / NBRC 100395).